The chain runs to 233 residues: Large ribosomal subunit protein eL6x (233 aa).

The span at 48–72 shows a compositional bias: basic and acidic residues; the sequence is HDAKSKVDAPVEKPPKFYPAEDVKK. The segment at 48–80 is disordered; that stretch reads HDAKSKVDAPVEKPPKFYPAEDVKKPLPNRRTA.

The protein belongs to the eukaryotic ribosomal protein eL6 family.

In Arabidopsis thaliana (Mouse-ear cress), this protein is Large ribosomal subunit protein eL6x (RPL6C).